The sequence spans 309 residues: Ribonuclease Z (309 aa).

Zn(2+) is bound by residues H63, H65, D67, H68, H145, D216, and H274. Residue D67 is the Proton acceptor of the active site.

The protein belongs to the RNase Z family. As to quaternary structure, homodimer. It depends on Zn(2+) as a cofactor.

The enzyme catalyses Endonucleolytic cleavage of RNA, removing extra 3' nucleotides from tRNA precursor, generating 3' termini of tRNAs. A 3'-hydroxy group is left at the tRNA terminus and a 5'-phosphoryl group is left at the trailer molecule.. Its function is as follows. Zinc phosphodiesterase, which displays some tRNA 3'-processing endonuclease activity. Probably involved in tRNA maturation, by removing a 3'-trailer from precursor tRNA. This chain is Ribonuclease Z, found in Streptococcus uberis (strain ATCC BAA-854 / 0140J).